The sequence spans 80 residues: U-poneritoxin(01)-Om3a (80 aa).

An N-terminal signal peptide occupies residues 1–25 (MKPSGLALAFLVVFMMAIMYNSVQA). Residues 26 to 39 (AAIADADAEAEAIA) constitute a propeptide that is removed on maturation.

The protein belongs to the formicidae venom precursor-01 superfamily. Post-translationally, truncated sequences of this peptide have also been found in the venom. It is possible they have been cleaved in the venom. As to expression, expressed by the venom gland.

The protein resides in the secreted. Functionally, cationic amphipathic alpha-helical peptide with antimicrobial activities against E.coli (MIC=3.1 uM), S.aureus (MIC=25 uM), and S.cerevisiae (MIC=50 uM). Also shows histamine-releasing activity (37.5% at 10 uM). Does not show hemolytic activity, even at 50 uM. The polypeptide is U-poneritoxin(01)-Om3a (Odontomachus monticola (Trap-jaw ant)).